Reading from the N-terminus, the 220-residue chain is Redox-sensing transcriptional repressor Rex (220 aa).

The H-T-H motif DNA-binding region spans methionine 16–phenylalanine 55. NAD(+) is bound at residue glycine 90 to glycine 95.

The protein belongs to the transcriptional regulatory Rex family. As to quaternary structure, homodimer.

It localises to the cytoplasm. Its function is as follows. Modulates transcription in response to changes in cellular NADH/NAD(+) redox state. The polypeptide is Redox-sensing transcriptional repressor Rex (Solidesulfovibrio magneticus (strain ATCC 700980 / DSM 13731 / RS-1) (Desulfovibrio magneticus)).